Reading from the N-terminus, the 485-residue chain is Alpha-amylase (485 aa).

The signal sequence occupies residues 1–18; the sequence is MFLTSVLILCSLAALSLG. Residue Gln-19 is modified to Pyrrolidone carboxylic acid. Cys-46 and Cys-102 form a disulfide bridge. 3 residues coordinate Ca(2+): Asn-116, Arg-164, and Asp-173. Cysteines 152 and 166 form a disulfide. Position 201 (Arg-201) interacts with chloride. The Nucleophile role is filled by Asp-203. Residue His-207 participates in Ca(2+) binding. Glu-240 (proton donor) is an active-site residue. Residues Asn-303 and Arg-339 each coordinate chloride. A disulfide bridge links Cys-439 with Cys-451. An N-linked (GlcNAc...) asparagine glycan is attached at Asn-448.

This sequence belongs to the glycosyl hydrolase 13 family. As to quaternary structure, monomer. Ca(2+) is required as a cofactor. It depends on chloride as a cofactor. As to expression, expressed in larval and adult gut.

The protein resides in the secreted. It catalyses the reaction Endohydrolysis of (1-&gt;4)-alpha-D-glucosidic linkages in polysaccharides containing three or more (1-&gt;4)-alpha-linked D-glucose units.. This is Alpha-amylase from Phaedon cochleariae (Mustard beetle).